Reading from the N-terminus, the 148-residue chain is Large ribosomal subunit protein uL15 (148 aa).

The interval Met-1–Val-47 is disordered. Residues Thr-31–Gly-45 show a composition bias toward basic residues.

Belongs to the universal ribosomal protein uL15 family. As to quaternary structure, part of the 50S ribosomal subunit.

In terms of biological role, binds to the 23S rRNA. This Pseudothermotoga lettingae (strain ATCC BAA-301 / DSM 14385 / NBRC 107922 / TMO) (Thermotoga lettingae) protein is Large ribosomal subunit protein uL15.